The primary structure comprises 548 residues: Probable malate:quinone oxidoreductase (548 aa).

The segment at Asp-521–Leu-548 is disordered. Over residues Pro-530–Lys-541 the composition is skewed to low complexity.

Belongs to the MQO family. Requires FAD as cofactor.

The catalysed reaction is (S)-malate + a quinone = a quinol + oxaloacetate. It functions in the pathway carbohydrate metabolism; tricarboxylic acid cycle; oxaloacetate from (S)-malate (quinone route): step 1/1. The sequence is that of Probable malate:quinone oxidoreductase from Escherichia coli (strain UTI89 / UPEC).